Here is a 239-residue protein sequence, read N- to C-terminus: Ras-like protein B (239 aa).

Residues 13-18 (GVGKTA), 29-35 (VETYDPT), 59-60 (AG), 139-142 (NKSD), and 169-171 (SAK) each bind GTP. An Effector region motif is present at residues 32–40 (YDPTIEDSY). Residues 191–227 (RQQQQGGRAQDRRPTGLGPMRDRDAGPEYPKTFRPDR) are disordered. Residues 199–226 (AQDRRPTGLGPMRDRDAGPEYPKTFRPD) show a composition bias toward basic and acidic residues.

The protein belongs to the small GTPase superfamily. Ras family. In terms of assembly, interacts with mpkA.

It carries out the reaction GTP + H2O = GDP + phosphate + H(+). Functionally, ras-like protein involved in the activation of Ras protein signal transduction. Ras proteins bind GDP/GTP and possess intrinsic GTPase activity. Plays a role in hyphal morphology and conidiophore development. Required for full virulence. The polypeptide is Ras-like protein B (Aspergillus fumigatus (strain ATCC MYA-4609 / CBS 101355 / FGSC A1100 / Af293) (Neosartorya fumigata)).